The primary structure comprises 455 residues: Carbamoyl phosphate synthase arginine-specific small chain (455 aa).

Residues 1-28 (MFARFCKAIPAKGRAFPSVNASIQSRLM) constitute a mitochondrion transit peptide. Positions 219–406 (HVAVIDCGVK…IDSVRKYKAN (188 aa)) constitute a Glutamine amidotransferase type-1 domain. The active-site Nucleophile is Cys-295. Catalysis depends on residues His-379 and Glu-381.

The protein belongs to the CarA family. Heterodimer composed of 2 chains; the small (or glutamine) chain promotes the hydrolysis of glutamine to ammonia, which is used by the large (or ammonia) chain to synthesize carbamoyl phosphate.

It is found in the mitochondrion matrix. It carries out the reaction hydrogencarbonate + L-glutamine + 2 ATP + H2O = carbamoyl phosphate + L-glutamate + 2 ADP + phosphate + 2 H(+). The enzyme catalyses L-glutamine + H2O = L-glutamate + NH4(+). It functions in the pathway amino-acid biosynthesis; L-arginine biosynthesis; carbamoyl phosphate from bicarbonate: step 1/1. Its function is as follows. Small subunit of the arginine-specific carbamoyl phosphate synthase (CPSase). CPSase catalyzes the formation of carbamoyl phosphate from the ammonia moiety of glutamine, carbonate, and phosphate donated by ATP, the first step of the arginine biosynthetic pathway. The small subunit (glutamine amidotransferase) binds and cleaves glutamine to supply the large subunit with the substrate ammonia. This Aspergillus clavatus (strain ATCC 1007 / CBS 513.65 / DSM 816 / NCTC 3887 / NRRL 1 / QM 1276 / 107) protein is Carbamoyl phosphate synthase arginine-specific small chain (cpa1).